A 59-amino-acid chain; its full sequence is UPF0434 protein Noc_2677 (59 aa).

The protein belongs to the UPF0434 family.

The sequence is that of UPF0434 protein Noc_2677 from Nitrosococcus oceani (strain ATCC 19707 / BCRC 17464 / JCM 30415 / NCIMB 11848 / C-107).